The sequence spans 947 residues: MAVMEMACPGAPGSAVGQQKELPKAKEKTPPLGKKQSSVYKLEAVEKSPVFCGKWEILNDVITKGTAKEGSEAGPAAISIIAQAECENSQEFSPTFSERIFIAGSKQYSQSESLDQIPNNVAHATEGKMARVCWKGKRRSKARKKRKKKSSKSLAHAGVALAKPLPRTPEQESCTIPVQEDESPLGAPYVRNTPQFTKPLKEPGLGQLCFKQLGEGLRPALPRSELHKLISPLQCLNHVWKLHHPQDGGPLPLPTHPFPYSRLPHPFPFHPLQPWKPHPLESFLGKLACVDSQKPLPDPHLSKLACVDSPKPLPGPHLEPSCLSRGAHEKFSVEEYLVHALQGSVSSGQAHSLTSLAKTWAARGSRSREPSPKTEDNEGVLLTEKLKPVDYEYREEVHWATHQLRLGRGSFGEVHRMEDKQTGFQCAVKKVRLEVFRAEELMACAGLTSPRIVPLYGAVREGPWVNIFMELLEGGSLGQLVKEQGCLPEDRALYYLGQALEGLEYLHSRRILHGDVKADNVLLSSDGSHAALCDFGHAVCLQPDGLGKSLLTGDYIPGTETHMAPEVVLGRSCDAKVDVWSSCCMMLHMLNGCHPWTQFFRGPLCLKIASEPPPVREIPPSCAPLTAQAIQEGLRKEPIHRVSAAELGGKVNRALQQVGGLKSPWRGEYKEPRHPPPNQANYHQTLHAQPRELSPRAPGPRPAEETTGRAPKLQPPLPPEPPEPNKSPPLTLSKEESGMWEPLPLSSLEPAPARNPSSPERKATVPEQELQQLEIELFLNSLSQPFSLEEQEQILSCLSIDSLSLSDDSEKNPSKASQSSRDTLSSGVHSWSSQAEARSSSWNMVLARGRPTDTPSYFNGVKVQIQSLNGEHLHIREFHRVKVGDIATGISSQIPAAAFSLVTKDGQPVRYDMEVPDSGIDLQCTLAPDGSFAWSWRVKHGQLENRP.

Disordered stretches follow at residues 1 to 37 (MAVMEMACPGAPGSAVGQQKELPKAKEKTPPLGKKQS) and 135 to 171 (KGKRRSKARKKRKKKSSKSLAHAGVALAKPLPRTPEQ). Positions 135–151 (KGKRRSKARKKRKKKSS) are enriched in basic residues. The 256-residue stretch at 400–655 (ATHQLRLGRG…ELGGKVNRAL (256 aa)) folds into the Protein kinase domain. Residues 401-653 (THQLRLGRGS…AAELGGKVNR (253 aa)) are interaction with ZFP91. Residues 406–414 (LGRGSFGEV) and Lys-429 each bind ATP. Asp-515 functions as the Proton acceptor in the catalytic mechanism. Thr-559 carries the post-translational modification Phosphothreonine. Disordered stretches follow at residues 662–766 (KSPW…ATVP) and 805–830 (LSDDSEKNPSKASQSSRDTLSSGVHS). Residues 665 to 674 (WRGEYKEPRH) show a composition bias toward basic and acidic residues. Positions 713 to 727 (LQPPLPPEPPEPNKS) are enriched in pro residues. Residues 741-752 (EPLPLSSLEPAP) show a composition bias toward low complexity. A compositionally biased stretch (polar residues) spans 814 to 829 (SKASQSSRDTLSSGVH).

Belongs to the protein kinase superfamily. STE Ser/Thr protein kinase family. MAP kinase kinase kinase subfamily. Interacts with TRAF2, TRAF5, TRAF6, IKKA and NFKB2/P100. Interacts with TRAF3 and PELI3. Interacts with NIBP; the interaction is direct. Interacts with ARRB1 and ARRB2. Interacts with GRB10. Interacts with ZFP91. Interacts with NLRP12; this interaction promotes proteasomal degradation of MAP3K14. Directly interacts with DDX3X. Interacts (via C-terminus and kinase domain) with PPPC3A (via N-terminus) and PPP3CB. In terms of processing, autophosphorylated. Phosphorylation at Thr-559 is required to activate its kinase activity and 'Lys-63'-linked polyubiquitination. Phosphorylated by CHUK/IKKA leading to MAP3K14 destabilization. Post-translationally, ubiquitinated. Undergoes both 'Lys-48'- and 'Lys-63'-linked polyubiquitination. 'Lys-48'-linked polyubiquitination leads to its degradation by the proteasome, while 'Lys-63'-linked polyubiquitination stabilizes and activates it. In terms of tissue distribution, weakly expressed in testis, small intestine, spleen, thymus, peripheral blood leukocytes, prostate, ovary and colon.

It is found in the cytoplasm. The enzyme catalyses L-seryl-[protein] + ATP = O-phospho-L-seryl-[protein] + ADP + H(+). It carries out the reaction L-threonyl-[protein] + ATP = O-phospho-L-threonyl-[protein] + ADP + H(+). Lymphotoxin beta-activated kinase which seems to be exclusively involved in the activation of NF-kappa-B and its transcriptional activity. Phosphorylates CHUK/IKKA, thereby promoting proteolytic processing of NFKB2/P100, which leads to NF-kappa-B activation via the non-canonical pathway. Has an essential role in the non-canonical NF-kappa-B signaling that regulates genes encoding molecules involved in B-cell survival, lymphoid organogenesis, and immune response. Could act in a receptor-selective manner. This Homo sapiens (Human) protein is Mitogen-activated protein kinase kinase kinase 14.